The sequence spans 315 residues: Putative HTH-type transcriptional regulatory protein PF1851 (315 aa).

The HTH cro/C1-type domain maps to leucine 131 to phenylalanine 189. A DNA-binding region (H-T-H motif) is located at residues threonine 142–lysine 161.

The protein is Putative HTH-type transcriptional regulatory protein PF1851 of Pyrococcus furiosus (strain ATCC 43587 / DSM 3638 / JCM 8422 / Vc1).